The chain runs to 600 residues: Elongation factor 4 (600 aa).

Residues 13-194 form the tr-type G domain; sequence DRIRNFCIIA…AIVERIPPPR (182 aa). GTP is bound by residues 25–30 and 141–144; these read DHGKST and NKID.

This sequence belongs to the TRAFAC class translation factor GTPase superfamily. Classic translation factor GTPase family. LepA subfamily.

It is found in the cell membrane. The enzyme catalyses GTP + H2O = GDP + phosphate + H(+). Functionally, required for accurate and efficient protein synthesis under certain stress conditions. May act as a fidelity factor of the translation reaction, by catalyzing a one-codon backward translocation of tRNAs on improperly translocated ribosomes. Back-translocation proceeds from a post-translocation (POST) complex to a pre-translocation (PRE) complex, thus giving elongation factor G a second chance to translocate the tRNAs correctly. Binds to ribosomes in a GTP-dependent manner. This is Elongation factor 4 from Rubrobacter xylanophilus (strain DSM 9941 / JCM 11954 / NBRC 16129 / PRD-1).